The following is a 317-amino-acid chain: Methionyl-tRNA formyltransferase (317 aa).

A (6S)-5,6,7,8-tetrahydrofolate-binding site is contributed by 112–115; that stretch reads SLLP.

It belongs to the Fmt family.

It catalyses the reaction L-methionyl-tRNA(fMet) + (6R)-10-formyltetrahydrofolate = N-formyl-L-methionyl-tRNA(fMet) + (6S)-5,6,7,8-tetrahydrofolate + H(+). Attaches a formyl group to the free amino group of methionyl-tRNA(fMet). The formyl group appears to play a dual role in the initiator identity of N-formylmethionyl-tRNA by promoting its recognition by IF2 and preventing the misappropriation of this tRNA by the elongation apparatus. The protein is Methionyl-tRNA formyltransferase of Mycobacterium avium (strain 104).